Reading from the N-terminus, the 236-residue chain is UPF0257 lipoprotein YnfC (236 aa).

Residues 1-16 (MKYKLLPCLLAIFLTG) form the signal peptide. Cys17 is lipidated: N-palmitoyl cysteine. Cys17 is lipidated: S-diacylglycerol cysteine.

Belongs to the UPF0257 family.

The protein localises to the cell membrane. This chain is UPF0257 lipoprotein YnfC, found in Escherichia coli O17:K52:H18 (strain UMN026 / ExPEC).